The chain runs to 857 residues: Bifunctional uridylyltransferase/uridylyl-removing enzyme (857 aa).

The tract at residues 1–322 is uridylyltransferase; the sequence is MDTTPELLLC…FPSESMVTRE (322 aa). The segment at 323 to 679 is uridylyl-removing; sequence INDRFVERQG…ARISPAGEGL (357 aa). The HD domain occupies 441–563; sequence VDQHILMVVR…VGNGRYLTAL (123 aa). ACT domains are found at residues 680-760 and 788-857; these read QVAV…DPTQ and LLSV…ALAI.

This sequence belongs to the GlnD family. Requires Mg(2+) as cofactor.

The catalysed reaction is [protein-PII]-L-tyrosine + UTP = [protein-PII]-uridylyl-L-tyrosine + diphosphate. It carries out the reaction [protein-PII]-uridylyl-L-tyrosine + H2O = [protein-PII]-L-tyrosine + UMP + H(+). With respect to regulation, uridylyltransferase (UTase) activity is inhibited by glutamine, while glutamine activates uridylyl-removing (UR) activity. Its function is as follows. Modifies, by uridylylation and deuridylylation, the PII regulatory proteins (GlnB and homologs), in response to the nitrogen status of the cell that GlnD senses through the glutamine level. Under low glutamine levels, catalyzes the conversion of the PII proteins and UTP to PII-UMP and PPi, while under higher glutamine levels, GlnD hydrolyzes PII-UMP to PII and UMP (deuridylylation). Thus, controls uridylylation state and activity of the PII proteins, and plays an important role in the regulation of nitrogen assimilation and metabolism. This Cupriavidus metallidurans (strain ATCC 43123 / DSM 2839 / NBRC 102507 / CH34) (Ralstonia metallidurans) protein is Bifunctional uridylyltransferase/uridylyl-removing enzyme.